Here is a 656-residue protein sequence, read N- to C-terminus: Spermatogenesis-associated protein 13 (656 aa).

Residues 1–12 (MHPASVTTTSQD) are compositionally biased toward polar residues. The tract at residues 1–26 (MHPASVTTTSQDPCAPSGSCRGGRRR) is disordered. S82 bears the Phosphoserine mark. Residues 85-115 (IGLDRVGRRRQMKTSNVSSDGGAESSALVDD) are disordered. The interval 102 to 154 (SSDGGAESSALVDDNGSEEDFSYEELCQANPRYLQPGGEQLAINELISDGSVV) is ABR (APC-binding region) domain. At S118 the chain carries Phosphoserine. One can recognise an SH3 domain in the interval 151–210 (GSVVCAEALWDHVTMDDQELGFKAGDVIQVLEASNKDWWWGRNEDKEAWFPASFVRLRVN). Positions 215-242 (PENCSSSHGEEQDEDTSKARHKHPESQQ) are disordered. In terms of domain architecture, DH spans 244-428 (MRTNVIQEIM…KNVACLINER (185 aa)). The region spanning 459–565 (ELIHSGELTK…WLQAYADERR (107 aa)) is the PH domain. The interval 565 to 656 (RRVQEDQQMG…TFHKLTPFRK (92 aa)) is C-terminal tail.

As to quaternary structure, interacts (via ABR and SH3 domain) with APC. The binding of APC enhances its GEF activity by relieving it from an autoinhibitory conformation, in which the ABR and SH3 domains are associated with the C-terminal tail. Interacts (via C-terminal tail) with PPP1R9B (via C-terminus). Interacts with RAC1. Expression is aberrantly enhanced in most colorectal tumors.

It is found in the cytoplasm. The protein resides in the cell projection. It localises to the filopodium. Its subcellular location is the lamellipodium. The protein localises to the ruffle membrane. It is found in the podosome. Both the ABR and the SH3 domains contribute to maintaining the protein in an inhibited conformation by associating with the C-terminal tail. Binding of these domains to the C-terminal tail inhibits the activity of the protein by blocking a region that is required for its GEF activity. Its function is as follows. Acts as a guanine nucleotide exchange factor (GEF) for RHOA, RAC1 and CDC42 GTPases. Regulates cell migration and adhesion assembly and disassembly through a RAC1, PI3K, RHOA and AKT1-dependent mechanism. Increases both RAC1 and CDC42 activity, but decreases the amount of active RHOA. Required for MMP9 up-regulation via the JNK signaling pathway in colorectal tumor cells. Involved in tumor angiogenesis and may play a role in intestinal adenoma formation and tumor progression. This is Spermatogenesis-associated protein 13 (Spata13) from Mus musculus (Mouse).